An 864-amino-acid polypeptide reads, in one-letter code: N-alpha-acetyltransferase 16, NatA auxiliary subunit (864 aa).

TPR repeat units lie at residues 46-79 (GETL…DVKS), 80-113 (HVCW…DKDN), 148-184 (RASW…PPNK), 224-257 (LLVE…NAEN), 374-407 (LWVQ…TPTL), 409-441 (ELFY…DTAD), and 485-518 (MWFQ…FFEI). Residues 603-638 (QKKAKLEEERKHAERERQQKNQKKKRDEEEEEASGL) form a disordered region. A compositionally biased stretch (basic and acidic residues) spans 606-621 (AKLEEERKHAERERQQ).

In terms of assembly, component of the N-terminal acetyltransferase A (NatA) complex composed of NAA10 and NAA16.

Its function is as follows. Auxillary subunit of the N-terminal acetyltransferase A (NatA) complex which displays alpha (N-terminal) acetyltransferase activity. This Homo sapiens (Human) protein is N-alpha-acetyltransferase 16, NatA auxiliary subunit (NAA16).